Consider the following 262-residue polypeptide: MSYFTQEQKTQWKDNGFVHLKGFLNEALAQDIKDWTQELYEWEEAPGKWMKYFETSSDTGERLLCRVENFIDYHKGIKGFLCGEMIYGMVSELMGEQAVLFKEKINFKYPGGAGFAYHQDAPAFTSFGQKYHITMMVSVDASNEENGCLRMAHGFSEEKTLEQEPDGTVCKKLAAKLDWRPLETGPGDLVLFNSYVPHYSEANTSDRSRRAMFITYNRLSEGEKRLDYFKDKREKFPPEAERIEGKDYSSAESLYNLGNPIK.

A 2-oxoglutarate-binding site is contributed by lysine 108. Fe cation-binding residues include histidine 118, aspartate 120, and histidine 198.

This sequence belongs to the PhyH family. The cofactor is Fe(2+).

It catalyses the reaction (2-aminoethyl)phosphonate + 2-oxoglutarate + O2 = (1R)-(2-amino-1-hydroxyethyl)phosphonate + succinate + CO2. Activity is enhanced by ascorbate. In terms of biological role, involved in the degradation of the organophosphonate 2-aminoethylphosphonic acid (2-AEP). Catalyzes the hydroxylation of 2-aminoethylphosphonic acid to yield (2-amino-1-hydroxyethyl)phosphonic acid. The chain is 2-aminoethylphosphonate dioxygenase from Uncultured bacterium HF130_AEPn_1.